A 388-amino-acid polypeptide reads, in one-letter code: Quinolone resistance protein NorA (388 aa).

12 helical membrane-spanning segments follow: residues 5 to 25 (IFVL…VIPV), 42 to 62 (LLVA…GTLA), 69 to 89 (LIIC…AVGH), 99 to 119 (VIGG…IADV), 129 to 149 (FGYM…IGGF), 157 to 177 (MPFY…VVLI), 201 to 221 (WKVF…LSAF), 239 to 259 (DISI…IYFF), 269 to 289 (LTFI…LVIA), 293 to 313 (WTIM…RPAI), 331 to 351 (LNST…GALF), and 355 to 375 (IEAP…IVLI).

This sequence belongs to the major facilitator superfamily. TCR/Tet family.

Its subcellular location is the cell membrane. Functionally, involved in quinolone resistance. May constitute a membrane-associated active efflux pump of hydrophilic quinolones. This Staphylococcus aureus (strain MRSA252) protein is Quinolone resistance protein NorA (norA).